We begin with the raw amino-acid sequence, 155 residues long: Small ribosomal subunit protein uS7cz/uS7cy (155 aa).

It belongs to the universal ribosomal protein uS7 family. In terms of assembly, part of the 30S ribosomal subunit.

It is found in the plastid. It localises to the chloroplast. In terms of biological role, one of the primary rRNA binding proteins, it binds directly to 16S rRNA where it nucleates assembly of the head domain of the 30S subunit. This is Small ribosomal subunit protein uS7cz/uS7cy (rps7-A) from Anthoceros angustus (Hornwort).